The following is a 313-amino-acid chain: MTQPIVVAALYKFVTLEDYVALREPLLQAMVDNGIKGTLLIAEEGINGTVSGSREGIDGLMAWLKTDPRMVDIDHKESYCDDQPFYRTKVKLKKEIVTLGVEGVDPNKKVGTYVEPQDWNALISDPEVLLIDTRNDYEVSIGTFEGAIDPKTTSFREFPDYIKANFDPAKHKKVAMFCTGGIRCEKASSYMLSEGFDEVYHLKGGILKYLEEVPQEETKWQGDCFVFDNRVTVRHDLSEGDYDQCHACRTPVSVEDRASEHYVAGISCPHCWDKLPEKTRRSAIDRQKQIELAKARNMPHPIGFNYKQTPSEA.

A Rhodanese domain is found at 124 to 218 (SDPEVLLIDT…YLEEVPQEET (95 aa)). C178 acts as the Cysteine persulfide intermediate in catalysis.

The protein belongs to the TrhO family.

The enzyme catalyses uridine(34) in tRNA + AH2 + O2 = 5-hydroxyuridine(34) in tRNA + A + H2O. In terms of biological role, catalyzes oxygen-dependent 5-hydroxyuridine (ho5U) modification at position 34 in tRNAs. The polypeptide is tRNA uridine(34) hydroxylase (Pseudomonas fluorescens (strain SBW25)).